The following is a 167-amino-acid chain: uncharacterized protein (167 aa).

One can recognise an N-acetyltransferase domain in the interval 1 to 148; sequence MLIRVEIPID…SAFQVHRLAD (148 aa).

The protein belongs to the acetyltransferase family.

This is an uncharacterized protein from Escherichia coli O157:H7.